The following is a 207-amino-acid chain: MRNGDSKWITSKQARQDVQKFRAKSSVILSSSSTILSDNPLLNVRYKELDKKTLSIFPNKIFQHPIRVIIDSKNRVQPSHNIIKTKGKIWLIRLKSDRKIWPKNTTQIIEKDHNKKINIFSLLKFLGQSEINNVWIEAGSTLSGFLLNSYLIDELIIYMAPKILGHEAKPLCMIYEKLKISNSLQFKFKNICQIGPDIRLILSPKKI.

A substrate-binding site is contributed by serine 6. Tryptophan 8 serves as a coordination point for NADP(+). Arginine 22 provides a ligand contact to substrate. An NADP(+)-binding site is contributed by aspartate 38. The substrate site is built by leucine 42 and arginine 45. Residue serine 72 participates in NADP(+) binding. Glutamate 137 is a binding site for substrate.

Belongs to the HTP reductase family.

It catalyses the reaction 5-amino-6-(5-phospho-D-ribitylamino)uracil + NADP(+) = 5-amino-6-(5-phospho-D-ribosylamino)uracil + NADPH + H(+). The protein operates within cofactor biosynthesis; riboflavin biosynthesis; 5-amino-6-(D-ribitylamino)uracil from GTP: step 3/4. The sequence is that of 5-amino-6-(5-phosphoribosylamino)uracil reductase (ribD2) from Buchnera aphidicola subsp. Acyrthosiphon pisum (strain APS) (Acyrthosiphon pisum symbiotic bacterium).